Here is a 217-residue protein sequence, read N- to C-terminus: Ribonuclease HII (217 aa).

In terms of domain architecture, RNase H type-2 spans 25 to 215 (KLIAGVDESG…VKHVISDINR (191 aa)). D31, E32, and D123 together coordinate a divalent metal cation.

This sequence belongs to the RNase HII family. It depends on Mn(2+) as a cofactor. Mg(2+) is required as a cofactor.

It localises to the cytoplasm. It catalyses the reaction Endonucleolytic cleavage to 5'-phosphomonoester.. Endonuclease that specifically degrades the RNA of RNA-DNA hybrids. The polypeptide is Ribonuclease HII (Blochmanniella pennsylvanica (strain BPEN)).